A 211-amino-acid polypeptide reads, in one-letter code: Peptidyl-tRNA hydrolase (211 aa).

Position 17 (Tyr-17) interacts with tRNA. The active-site Proton acceptor is His-22. TRNA contacts are provided by Phe-79, Asn-81, and Asn-127.

It belongs to the PTH family. Monomer.

The protein localises to the cytoplasm. It carries out the reaction an N-acyl-L-alpha-aminoacyl-tRNA + H2O = an N-acyl-L-amino acid + a tRNA + H(+). Its function is as follows. Hydrolyzes ribosome-free peptidyl-tRNAs (with 1 or more amino acids incorporated), which drop off the ribosome during protein synthesis, or as a result of ribosome stalling. Catalyzes the release of premature peptidyl moieties from peptidyl-tRNA molecules trapped in stalled 50S ribosomal subunits, and thus maintains levels of free tRNAs and 50S ribosomes. This is Peptidyl-tRNA hydrolase from Solidesulfovibrio magneticus (strain ATCC 700980 / DSM 13731 / RS-1) (Desulfovibrio magneticus).